A 323-amino-acid polypeptide reads, in one-letter code: tRNA U34 carboxymethyltransferase (323 aa).

Carboxy-S-adenosyl-L-methionine is bound by residues Lys-91, Trp-105, Lys-110, Gly-130, 152 to 154 (DPT), 181 to 182 (IE), Met-196, Tyr-200, and Arg-315.

The protein belongs to the class I-like SAM-binding methyltransferase superfamily. CmoB family. As to quaternary structure, homotetramer.

The catalysed reaction is carboxy-S-adenosyl-L-methionine + 5-hydroxyuridine(34) in tRNA = 5-carboxymethoxyuridine(34) in tRNA + S-adenosyl-L-homocysteine + H(+). Its function is as follows. Catalyzes carboxymethyl transfer from carboxy-S-adenosyl-L-methionine (Cx-SAM) to 5-hydroxyuridine (ho5U) to form 5-carboxymethoxyuridine (cmo5U) at position 34 in tRNAs. The protein is tRNA U34 carboxymethyltransferase of Shigella flexneri serotype 5b (strain 8401).